The chain runs to 344 residues: DNA-directed RNA polymerase subunit alpha (344 aa).

The segment at M1 to E246 is alpha N-terminal domain (alpha-NTD). The tract at residues E259–E344 is alpha C-terminal domain (alpha-CTD).

It belongs to the RNA polymerase alpha chain family. As to quaternary structure, homodimer. The RNAP catalytic core consists of 2 alpha, 1 beta, 1 beta' and 1 omega subunit. When a sigma factor is associated with the core the holoenzyme is formed, which can initiate transcription.

It carries out the reaction RNA(n) + a ribonucleoside 5'-triphosphate = RNA(n+1) + diphosphate. DNA-dependent RNA polymerase catalyzes the transcription of DNA into RNA using the four ribonucleoside triphosphates as substrates. The polypeptide is DNA-directed RNA polymerase subunit alpha (Borrelia garinii subsp. bavariensis (strain ATCC BAA-2496 / DSM 23469 / PBi) (Borreliella bavariensis)).